Consider the following 578-residue polypeptide: Penicillin-binding protein activator LpoA (578 aa).

The N-terminal stretch at 1 to 30 (MPTILVQSYGFRQKMKTIFIPTALALLLAA) is a signal peptide. C31 carries the N-palmitoyl cysteine lipid modification. C31 is lipidated: S-diacylglycerol cysteine.

This sequence belongs to the LpoA family. As to quaternary structure, interacts with PBP1a.

Its subcellular location is the cell outer membrane. Its function is as follows. Regulator of peptidoglycan synthesis that is essential for the function of penicillin-binding protein 1A (PBP1a). In Glaesserella parasuis serovar 5 (strain SH0165) (Haemophilus parasuis), this protein is Penicillin-binding protein activator LpoA.